A 143-amino-acid polypeptide reads, in one-letter code: Nucleoside diphosphate kinase (143 aa).

Residues Lys11, Phe59, Arg87, Thr93, Arg104, and Asn114 each coordinate ATP. His117 functions as the Pros-phosphohistidine intermediate in the catalytic mechanism.

It belongs to the NDK family. Homotetramer. Mg(2+) serves as cofactor.

The protein localises to the cytoplasm. The catalysed reaction is a 2'-deoxyribonucleoside 5'-diphosphate + ATP = a 2'-deoxyribonucleoside 5'-triphosphate + ADP. It catalyses the reaction a ribonucleoside 5'-diphosphate + ATP = a ribonucleoside 5'-triphosphate + ADP. Functionally, major role in the synthesis of nucleoside triphosphates other than ATP. The ATP gamma phosphate is transferred to the NDP beta phosphate via a ping-pong mechanism, using a phosphorylated active-site intermediate. The polypeptide is Nucleoside diphosphate kinase (Clostridium perfringens (strain ATCC 13124 / DSM 756 / JCM 1290 / NCIMB 6125 / NCTC 8237 / Type A)).